The chain runs to 104 residues: Phosphoribosyl-ATP pyrophosphatase (104 aa).

This sequence belongs to the PRA-PH family.

It localises to the cytoplasm. It catalyses the reaction 1-(5-phospho-beta-D-ribosyl)-ATP + H2O = 1-(5-phospho-beta-D-ribosyl)-5'-AMP + diphosphate + H(+). It functions in the pathway amino-acid biosynthesis; L-histidine biosynthesis; L-histidine from 5-phospho-alpha-D-ribose 1-diphosphate: step 2/9. The protein is Phosphoribosyl-ATP pyrophosphatase of Methanoregula boonei (strain DSM 21154 / JCM 14090 / 6A8).